The sequence spans 338 residues: GTPase Obg (338 aa).

An Obg domain is found at 1–159 (MSFIDEVKIH…RWLRLELKLM (159 aa)). Residues 160–331 (ADVGLLGMPS…LLDEIARNLW (172 aa)) form the OBG-type G domain. Residues 166–173 (GMPSVGKS), 191–195 (FTTLK), 213–216 (DIPG), 283–286 (NKID), and 312–314 (SAA) each bind GTP. Positions 173 and 193 each coordinate Mg(2+).

Belongs to the TRAFAC class OBG-HflX-like GTPase superfamily. OBG GTPase family. As to quaternary structure, monomer. Mg(2+) is required as a cofactor.

The protein localises to the cytoplasm. An essential GTPase which binds GTP, GDP and possibly (p)ppGpp with moderate affinity, with high nucleotide exchange rates and a fairly low GTP hydrolysis rate. Plays a role in control of the cell cycle, stress response, ribosome biogenesis and in those bacteria that undergo differentiation, in morphogenesis control. The sequence is that of GTPase Obg from Geotalea uraniireducens (strain Rf4) (Geobacter uraniireducens).